The chain runs to 116 residues: Large ribosomal subunit protein bL19 (116 aa).

The protein belongs to the bacterial ribosomal protein bL19 family.

This protein is located at the 30S-50S ribosomal subunit interface and may play a role in the structure and function of the aminoacyl-tRNA binding site. This chain is Large ribosomal subunit protein bL19, found in Nocardioides sp. (strain ATCC BAA-499 / JS614).